The primary structure comprises 685 residues: Mitotic interactor and substrate of PLK1 (685 aa).

A Phosphoserine; by CDK1 modification is found at serine 78. Disordered regions lie at residues 155 to 181 (SGTV…STPL) and 207 to 253 (NKEV…QGKG). Residue threonine 172 is modified to Phosphothreonine; by CDK1. Threonine 179 carries the post-translational modification Phosphothreonine. Serine 214 bears the Phosphoserine; by CDK1 mark. Residue threonine 219 is modified to Phosphothreonine. At serine 284 the chain carries Phosphoserine; by CDK1. Threonine 287 is subject to Phosphothreonine; by CDK1. The disordered stretch occupies residues 345–499 (GRPSLYVQRD…PWKLPRGSPQ (155 aa)). Serine 348 carries the post-translational modification Phosphoserine. Positions 355-371 (MVQETQREEDHRREGLH) are enriched in basic and acidic residues. Residue threonine 377 is modified to Phosphothreonine; by CDK1. A Phosphoserine modification is found at serine 382. Residues 392-417 (ALSSDSILSPDSILSPAPDARAADPA) are compositionally biased toward low complexity. Serine 394, serine 395, and serine 397 each carry phosphoserine; by PLK1. Serine 406 and serine 436 each carry phosphoserine. Residues 454–469 (SGLSTVDTEAATSPKA) show a composition bias toward polar residues. Serine 477 bears the Phosphoserine; by PLK1 mark. Polar residues predominate over residues 478–488 (ESSGKPMSTKQ). Phosphoserine is present on residues serine 547 and serine 549. The stretch at 551 to 575 (DLLERERESVLRREREVAEERRNAL) forms a coiled coil. Disordered stretches follow at residues 575-607 (LFPE…SYSV) and 629-651 (PVDS…NPSD). Serine 581 is modified (phosphoserine; by PLK1). A Phosphothreonine modification is found at threonine 583. Residues 589–607 (DQNSRSSSQASGITGSYSV) show a composition bias toward polar residues. Serine 592 carries the post-translational modification Phosphoserine; by PLK1. Position 681 is a phosphoserine (serine 681).

This sequence belongs to the MISP family. In terms of assembly, associates with F-actin. Interacts with DCTN1; this interaction regulates DCTN1 distribution at the cell cortex. Interacts with PTK2/FAK and MAPRE1. Post-translationally, phosphorylated by CDK1 and PLK1. CDK1 is the priming kinase for PLK1 phosphorylation. Phosphorylation by PLK1 is required for proper spindle orientation at metaphase.

It localises to the cell junction. It is found in the focal adhesion. The protein localises to the cytoplasm. Its subcellular location is the cytoskeleton. The protein resides in the cell cortex. In terms of biological role, plays a role in mitotic spindle orientation and mitotic progression. Regulates the distribution of dynactin at the cell cortex in a PLK1-dependent manner, thus stabilizing cortical and astral microtubule attachments required for proper mitotic spindle positioning. May link microtubules to the actin cytospkeleton and focal adhesions. May be required for directed cell migration and centrosome orientation. May also be necessary for proper stacking of the Golgi apparatus. This chain is Mitotic interactor and substrate of PLK1, found in Pongo abelii (Sumatran orangutan).